A 267-amino-acid polypeptide reads, in one-letter code: Heme-containing CO-sensing transcriptional regulator RcoM 2 (267 aa).

Positions Arg-15–Leu-86 constitute a PAS domain. His-74 and Met-104 together coordinate heme. Positions Ile-161 to Val-266 constitute an HTH LytTR-type domain.

It depends on heme as a cofactor.

It localises to the cytoplasm. One-component, b-type heme-containing aerobic sensor and transcriptional regulator that responds to CO by activating the expression of the oxidation operon cox. The polypeptide is Heme-containing CO-sensing transcriptional regulator RcoM 2 (rcoM2) (Paraburkholderia xenovorans (strain LB400)).